The chain runs to 428 residues: Spermidine/putrescine import ATP-binding protein PotA (428 aa).

The ABC transporter domain occupies 6–238; it reads IEFKNVSKTY…PINHFVADFI (233 aa). 40–47 is a binding site for ATP; that stretch reads GASGSGKS.

The protein belongs to the ABC transporter superfamily. Spermidine/putrescine importer (TC 3.A.1.11.1) family. In terms of assembly, the complex is composed of two ATP-binding proteins (PotA), two transmembrane proteins (PotB and PotC) and a solute-binding protein (PotD).

Its subcellular location is the cell membrane. The catalysed reaction is ATP + H2O + polyamine-[polyamine-binding protein]Side 1 = ADP + phosphate + polyamineSide 2 + [polyamine-binding protein]Side 1.. Part of the ABC transporter complex PotABCD involved in spermidine/putrescine import. Responsible for energy coupling to the transport system. This is Spermidine/putrescine import ATP-binding protein PotA from Lactococcus lactis subsp. lactis (strain IL1403) (Streptococcus lactis).